The primary structure comprises 417 residues: Tyrosine--tRNA ligase (417 aa).

Y39 is an L-tyrosine binding site. The short motif at 44–53 (PTASSLHAGS) is the 'HIGH' region element. Positions 176 and 180 each coordinate L-tyrosine. The short motif at 236 to 240 (KMGKS) is the 'KMSKS' region element. K239 serves as a coordination point for ATP. Positions 350 to 417 (AGLLALLVQA…KKKHVLIKPL (68 aa)) constitute an S4 RNA-binding domain.

The protein belongs to the class-I aminoacyl-tRNA synthetase family. TyrS type 1 subfamily. In terms of assembly, homodimer.

The protein localises to the cytoplasm. It carries out the reaction tRNA(Tyr) + L-tyrosine + ATP = L-tyrosyl-tRNA(Tyr) + AMP + diphosphate + H(+). Functionally, catalyzes the attachment of tyrosine to tRNA(Tyr) in a two-step reaction: tyrosine is first activated by ATP to form Tyr-AMP and then transferred to the acceptor end of tRNA(Tyr). The polypeptide is Tyrosine--tRNA ligase (Bartonella quintana (strain Toulouse) (Rochalimaea quintana)).